The sequence spans 220 residues: Octanoyltransferase (220 aa).

One can recognise a BPL/LPL catalytic domain in the interval 31–217; the sequence is ENTPDEIWLV…HFAEILGYNA (187 aa). Residues 70–77, 146–148, and 159–161 contribute to the substrate site; these read RGGQITYH, SLG, and GLA. Catalysis depends on C177, which acts as the Acyl-thioester intermediate.

Belongs to the LipB family.

It localises to the cytoplasm. It carries out the reaction octanoyl-[ACP] + L-lysyl-[protein] = N(6)-octanoyl-L-lysyl-[protein] + holo-[ACP] + H(+). The protein operates within protein modification; protein lipoylation via endogenous pathway; protein N(6)-(lipoyl)lysine from octanoyl-[acyl-carrier-protein]: step 1/2. Functionally, catalyzes the transfer of endogenously produced octanoic acid from octanoyl-acyl-carrier-protein onto the lipoyl domains of lipoate-dependent enzymes. Lipoyl-ACP can also act as a substrate although octanoyl-ACP is likely to be the physiological substrate. This is Octanoyltransferase from Actinobacillus succinogenes (strain ATCC 55618 / DSM 22257 / CCUG 43843 / 130Z).